Here is a 157-residue protein sequence, read N- to C-terminus: MRIGHGYDVHRFGEGDYITLGGVRIPHKHGLVAHSDGDVLLHALSDALLGAAALGDIGKHFPDTDPRFKGADSRALLRHVVAIVAEKGWKVGNVDATIVAQAPKMAPHIETMRGLIAEDLGVALDQVNVKATTTERLGFTGREEGIAVHAVALLMAR.

A divalent metal cation-binding residues include Asp-8 and His-10. Residues 8 to 10 (DVH) and 34 to 35 (HS) each bind 4-CDP-2-C-methyl-D-erythritol 2-phosphate. His-42 is an a divalent metal cation binding site. 4-CDP-2-C-methyl-D-erythritol 2-phosphate-binding positions include 56–58 (DIG), 61–65 (FPDTD), 100–106 (AQAPKMA), 132–135 (TTTE), Phe-139, and Arg-142.

Belongs to the IspF family. As to quaternary structure, homotrimer. A divalent metal cation serves as cofactor.

The catalysed reaction is 4-CDP-2-C-methyl-D-erythritol 2-phosphate = 2-C-methyl-D-erythritol 2,4-cyclic diphosphate + CMP. It functions in the pathway isoprenoid biosynthesis; isopentenyl diphosphate biosynthesis via DXP pathway; isopentenyl diphosphate from 1-deoxy-D-xylulose 5-phosphate: step 4/6. Involved in the biosynthesis of isopentenyl diphosphate (IPP) and dimethylallyl diphosphate (DMAPP), two major building blocks of isoprenoid compounds. Catalyzes the conversion of 4-diphosphocytidyl-2-C-methyl-D-erythritol 2-phosphate (CDP-ME2P) to 2-C-methyl-D-erythritol 2,4-cyclodiphosphate (ME-CPP) with a corresponding release of cytidine 5-monophosphate (CMP). This chain is 2-C-methyl-D-erythritol 2,4-cyclodiphosphate synthase, found in Pseudomonas paraeruginosa (strain DSM 24068 / PA7) (Pseudomonas aeruginosa (strain PA7)).